A 606-amino-acid polypeptide reads, in one-letter code: 4-hydroxy-3-methylbut-2-en-1-yl diphosphate synthase (flavodoxin) (606 aa).

[4Fe-4S] cluster-binding residues include Cys-513, Cys-516, Cys-547, and Glu-554.

The protein belongs to the IspG family. Requires [4Fe-4S] cluster as cofactor.

It catalyses the reaction (2E)-4-hydroxy-3-methylbut-2-enyl diphosphate + oxidized [flavodoxin] + H2O + 2 H(+) = 2-C-methyl-D-erythritol 2,4-cyclic diphosphate + reduced [flavodoxin]. Its pathway is isoprenoid biosynthesis; isopentenyl diphosphate biosynthesis via DXP pathway; isopentenyl diphosphate from 1-deoxy-D-xylulose 5-phosphate: step 5/6. Functionally, converts 2C-methyl-D-erythritol 2,4-cyclodiphosphate (ME-2,4cPP) into 1-hydroxy-2-methyl-2-(E)-butenyl 4-diphosphate. This Chlamydia abortus (strain DSM 27085 / S26/3) (Chlamydophila abortus) protein is 4-hydroxy-3-methylbut-2-en-1-yl diphosphate synthase (flavodoxin).